Here is a 399-residue protein sequence, read N- to C-terminus: Tyrosine--tRNA ligase 2 (399 aa).

The 'HIGH' region motif lies at 41–50; sequence PTAPDLHLGH. A 'KMSKS' region motif is present at residues 225–229; sequence KMSKS. Residue K228 participates in ATP binding. The region spanning 336–398 is the S4 RNA-binding domain; sequence ILIANLLKEA…GKRKFANITV (63 aa).

The protein belongs to the class-I aminoacyl-tRNA synthetase family. TyrS type 2 subfamily. Homodimer.

It localises to the cytoplasm. It catalyses the reaction tRNA(Tyr) + L-tyrosine + ATP = L-tyrosyl-tRNA(Tyr) + AMP + diphosphate + H(+). Catalyzes the attachment of tyrosine to tRNA(Tyr) in a two-step reaction: tyrosine is first activated by ATP to form Tyr-AMP and then transferred to the acceptor end of tRNA(Tyr). This is Tyrosine--tRNA ligase 2 from Pseudoalteromonas translucida (strain TAC 125).